We begin with the raw amino-acid sequence, 87 residues long: U15-lycotoxin-Ls1f (87 aa).

Positions 1–20 (MNSKIFAVLLLLAFLSCVLS) are cleaved as a signal peptide. Residues 21–66 (DQYCPKSSITACKKMNIRNDCCKDDDCTGGSWCCATPCGNFCKYPT) form the WAP domain. 5 disulfides stabilise this stretch: Cys24/Cys54, Cys32/Cys58, Cys41/Cys53, Cys42/Cys80, and Cys47/Cys62.

The protein belongs to the venom protein 11 family. 01 (wap-1) subfamily. Post-translationally, contains 5 disulfide bonds. Expressed by the venom gland.

It localises to the secreted. Functionally, has antibacterial activity. This chain is U15-lycotoxin-Ls1f, found in Lycosa singoriensis (Wolf spider).